The following is a 279-amino-acid chain: Thymidylate synthase (279 aa).

DUMP is bound at residue 132 to 133 (RR). Cys153 functions as the Nucleophile in the catalytic mechanism. DUMP-binding positions include 178–181 (RSND), Asn189, and 219–221 (HIY). (6R)-5,10-methylene-5,6,7,8-tetrahydrofolate is bound at residue Asp181. Residue Ala278 participates in (6R)-5,10-methylene-5,6,7,8-tetrahydrofolate binding.

This sequence belongs to the thymidylate synthase family. Bacterial-type ThyA subfamily. As to quaternary structure, homodimer.

It is found in the cytoplasm. The enzyme catalyses dUMP + (6R)-5,10-methylene-5,6,7,8-tetrahydrofolate = 7,8-dihydrofolate + dTMP. It functions in the pathway pyrimidine metabolism; dTTP biosynthesis. In terms of biological role, catalyzes the reductive methylation of 2'-deoxyuridine-5'-monophosphate (dUMP) to 2'-deoxythymidine-5'-monophosphate (dTMP) while utilizing 5,10-methylenetetrahydrofolate (mTHF) as the methyl donor and reductant in the reaction, yielding dihydrofolate (DHF) as a by-product. This enzymatic reaction provides an intracellular de novo source of dTMP, an essential precursor for DNA biosynthesis. The sequence is that of Thymidylate synthase from Lactococcus lactis subsp. lactis (strain IL1403) (Streptococcus lactis).